The sequence spans 235 residues: UPF0502 protein Bmul_3231/BMULJ_05293 (235 aa).

Belongs to the UPF0502 family.

This chain is UPF0502 protein Bmul_3231/BMULJ_05293, found in Burkholderia multivorans (strain ATCC 17616 / 249).